We begin with the raw amino-acid sequence, 350 residues long: Biotin synthase (350 aa).

The Radical SAM core domain maps to 38 to 265; that stretch reads NHVQVSTLLS…MSAVRLSAGR (228 aa). 3 residues coordinate [4Fe-4S] cluster: C53, C57, and C60. Positions 97, 128, 188, and 260 each coordinate [2Fe-2S] cluster.

Belongs to the radical SAM superfamily. Biotin synthase family. Homodimer. It depends on [4Fe-4S] cluster as a cofactor. [2Fe-2S] cluster is required as a cofactor.

It catalyses the reaction (4R,5S)-dethiobiotin + (sulfur carrier)-SH + 2 reduced [2Fe-2S]-[ferredoxin] + 2 S-adenosyl-L-methionine = (sulfur carrier)-H + biotin + 2 5'-deoxyadenosine + 2 L-methionine + 2 oxidized [2Fe-2S]-[ferredoxin]. It participates in cofactor biosynthesis; biotin biosynthesis; biotin from 7,8-diaminononanoate: step 2/2. In terms of biological role, catalyzes the conversion of dethiobiotin (DTB) to biotin by the insertion of a sulfur atom into dethiobiotin via a radical-based mechanism. This is Biotin synthase from Vibrio atlanticus (strain LGP32) (Vibrio splendidus (strain Mel32)).